The sequence spans 342 residues: Ribosomal RNA small subunit methyltransferase C (342 aa).

This sequence belongs to the methyltransferase superfamily. RsmC family. As to quaternary structure, monomer.

The protein localises to the cytoplasm. It catalyses the reaction guanosine(1207) in 16S rRNA + S-adenosyl-L-methionine = N(2)-methylguanosine(1207) in 16S rRNA + S-adenosyl-L-homocysteine + H(+). Functionally, specifically methylates the guanine in position 1207 of 16S rRNA in the 30S particle. The chain is Ribosomal RNA small subunit methyltransferase C from Shewanella piezotolerans (strain WP3 / JCM 13877).